Here is a 283-residue protein sequence, read N- to C-terminus: MSSNPSSVEKKLLHYTGKAIADFNMIRHGDRVMVCLSGGKDSFTLLTILNQLRIKSGNKFEIFAFTLDQAQPGWNDACLRQWLAEKSIPHEILTRDTYSIVKEKIPEGKTYCSLCSRLRRGIIYRYAEENGFNKIALGHHRDDLIRTLMMSILYNGDIRSMPPKLLSDNKKHIVIRPLCYVQEKDIITFASEQAFPIIPCNLCGSQENLMRKKVASLIDQLAIENPKVPSNMLHALQSLKPSQLMDQNFWNFKNLEDGLETAQSVQCEEVFNAQEFEFEDEKI.

The short motif at 37 to 42 is the PP-loop motif element; it reads SGGKDS. 3 residues coordinate [4Fe-4S] cluster: C112, C115, and C203.

Belongs to the TtcA family. As to quaternary structure, homodimer. Mg(2+) serves as cofactor. The cofactor is [4Fe-4S] cluster.

It localises to the cytoplasm. It catalyses the reaction cytidine(32) in tRNA + S-sulfanyl-L-cysteinyl-[cysteine desulfurase] + AH2 + ATP = 2-thiocytidine(32) in tRNA + L-cysteinyl-[cysteine desulfurase] + A + AMP + diphosphate + H(+). It functions in the pathway tRNA modification. Its function is as follows. Catalyzes the ATP-dependent 2-thiolation of cytidine in position 32 of tRNA, to form 2-thiocytidine (s(2)C32). The sulfur atoms are provided by the cysteine/cysteine desulfurase (IscS) system. In Legionella pneumophila (strain Corby), this protein is tRNA-cytidine(32) 2-sulfurtransferase.